Reading from the N-terminus, the 116-residue chain is uncharacterized protein (116 aa).

A helical transmembrane segment spans residues 22–42; the sequence is LIFLVVNLKVPAVGLELFLLV.

It localises to the membrane. This is an uncharacterized protein from Saccharomyces cerevisiae (strain ATCC 204508 / S288c) (Baker's yeast).